The chain runs to 485 residues: NADH-quinone oxidoreductase subunit N (485 aa).

14 consecutive transmembrane segments (helical) span residues 8 to 28, 35 to 55, 71 to 91, 105 to 125, 127 to 147, 159 to 179, 203 to 223, 235 to 255, 271 to 291, 297 to 317, 326 to 346, 373 to 393, 408 to 430, and 450 to 470; these read LIAL…MLSI, FLNA…LWFV, GFAM…CTFA, FYLL…ANHL, SLFL…GYAF, YTIL…LVYA, LLAG…LVPF, PAPV…GVVM, VVLA…ALSQ, LLGY…IALQ, VGVY…VVSL, AAVM…LGFI, WWLV…RVAV, and YSAG…LGVW.

It belongs to the complex I subunit 2 family. In terms of assembly, NDH-1 is composed of 13 different subunits. Subunits NuoA, H, J, K, L, M, N constitute the membrane sector of the complex.

It is found in the cell inner membrane. It carries out the reaction a quinone + NADH + 5 H(+)(in) = a quinol + NAD(+) + 4 H(+)(out). In terms of biological role, NDH-1 shuttles electrons from NADH, via FMN and iron-sulfur (Fe-S) centers, to quinones in the respiratory chain. The immediate electron acceptor for the enzyme in this species is believed to be ubiquinone. Couples the redox reaction to proton translocation (for every two electrons transferred, four hydrogen ions are translocated across the cytoplasmic membrane), and thus conserves the redox energy in a proton gradient. The chain is NADH-quinone oxidoreductase subunit N from Shigella boydii serotype 4 (strain Sb227).